We begin with the raw amino-acid sequence, 492 residues long: Uridine-cytidine kinase D (492 aa).

Positions 36-56 are disordered; sequence PLPKNKKDHDQSIESDSSFTR. 117 to 124 is a binding site for ATP; the sequence is GPVGAGKT. Positions 290–460 constitute a CYTH domain; that stretch reads EPVYVCKAKY…PQTFLYLYFK (171 aa). A compositionally biased stretch (low complexity) spans 468 to 483; it reads PNYSKLKPNNTNSKIL. The disordered stretch occupies residues 468–492; the sequence is PNYSKLKPNNTNSKILKNNKDKKNL.

Belongs to the uridine kinase family.

The catalysed reaction is uridine + ATP = UMP + ADP + H(+). The enzyme catalyses cytidine + ATP = CMP + ADP + H(+). Its pathway is pyrimidine metabolism; CTP biosynthesis via salvage pathway; CTP from cytidine: step 1/3. It functions in the pathway pyrimidine metabolism; UMP biosynthesis via salvage pathway; UMP from uridine: step 1/1. In terms of biological role, catalyzes the conversion of uridine into uridine monophosphate and cytidine into cytidine monophosphate in the pyrimidine salvage pathway. This chain is Uridine-cytidine kinase D (udkD), found in Dictyostelium discoideum (Social amoeba).